The primary structure comprises 683 residues: Phenoloxidase 3 (683 aa).

A propeptide spanning residues 1 to 48 (MADKKNLLLLFDHPTEPVFMDKGGNGTVFDVPASYVTDRYNKMCKKVQ) is cleaved from the precursor. N25 carries N-linked (GlcNAc...) asparagine glycosylation. H209, H213, and H239 together coordinate Cu cation. Residue E351 is the Proton acceptor of the active site. N358 carries N-linked (GlcNAc...) asparagine glycosylation. Cu cation-binding residues include H366, H370, and H406. N492 and N514 each carry an N-linked (GlcNAc...) asparagine glycan. Intrachain disulfides connect C574-C617 and C576-C624.

Belongs to the tyrosinase family. The cofactor is Cu(2+). In terms of processing, upon activation, a trypsin type protease cleaves prophenol oxidase to yield the active enzyme.

It is found in the secreted. The enzyme catalyses 2 L-dopa + O2 = 2 L-dopaquinone + 2 H2O. It carries out the reaction L-tyrosine + O2 = L-dopaquinone + H2O. Its function is as follows. This is a copper-containing oxidase that functions in the formation of pigments such as melanins and other polyphenolic compounds. Catalyzes the rate-limiting conversions of tyrosine to DOPA, DOPA to DOPA-quinone and possibly 5,6 dihydroxyindole to indole-5'6 quinone. In Drosophila erecta (Fruit fly), this protein is Phenoloxidase 3 (PPO3).